A 164-amino-acid chain; its full sequence is Putative 4-hydroxy-4-methyl-2-oxoglutarate aldolase (164 aa).

Substrate is bound by residues 80-83 and arginine 102; that span reads GGNL. An a divalent metal cation-binding site is contributed by aspartate 103.

This sequence belongs to the class II aldolase/RraA-like family. Homotrimer. A divalent metal cation serves as cofactor.

It carries out the reaction 4-hydroxy-4-methyl-2-oxoglutarate = 2 pyruvate. The enzyme catalyses oxaloacetate + H(+) = pyruvate + CO2. Functionally, catalyzes the aldol cleavage of 4-hydroxy-4-methyl-2-oxoglutarate (HMG) into 2 molecules of pyruvate. Also contains a secondary oxaloacetate (OAA) decarboxylase activity due to the common pyruvate enolate transition state formed following C-C bond cleavage in the retro-aldol and decarboxylation reactions. The polypeptide is Putative 4-hydroxy-4-methyl-2-oxoglutarate aldolase (Paraburkholderia phymatum (strain DSM 17167 / CIP 108236 / LMG 21445 / STM815) (Burkholderia phymatum)).